A 334-amino-acid polypeptide reads, in one-letter code: Protein SCO1 homolog 1, mitochondrial (334 aa).

A mitochondrion-targeting transit peptide spans 1-13 (MASALCRTASRLR). Positions 74-120 (SASDTTSKHDSGKPETKSSEKNEKSGGSESSDGGSDHKNERASGKDV) are disordered. 2 stretches are compositionally biased toward basic and acidic residues: residues 79–99 (TSKHDSGKPETKSSEKNEKSG) and 107–120 (GSDHKNERASGKDV). Residues 125-144 (VSWMSFFLLFATGAGLVYYY) traverse the membrane as a helical segment. Residues 166–331 (PSAGKAAIGG…TDGVVKEIRQ (166 aa)) form the Thioredoxin domain. Cysteine 206, cysteine 210, and histidine 295 together coordinate Cu cation.

The protein belongs to the SCO1/2 family. In terms of tissue distribution, expressed in the whole plant with highest expression in imbibed seeds, embryos, endosperm, and root tips.

It is found in the mitochondrion inner membrane. In terms of biological role, thought to play a role in cellular copper homeostasis, mitochondrial redox signaling or insertion of copper into the active site of COX. Plays an essential role in embryo development. The protein is Protein SCO1 homolog 1, mitochondrial (HCC1) of Arabidopsis thaliana (Mouse-ear cress).